A 439-amino-acid polypeptide reads, in one-letter code: Cysteine desulfurase-like protein ustD (439 aa).

The disordered stretch occupies residues 1-25 (MKSVATSSLDDVDKDSVPLGSSING). Pyridoxal 5'-phosphate-binding positions include 120–121 (TT), Asn206, and 255–257 (SWY). Lys258 is modified (N6-(pyridoxal phosphate)lysine).

Belongs to the class-V pyridoxal-phosphate-dependent aminotransferase family. It depends on pyridoxal 5'-phosphate as a cofactor.

It functions in the pathway mycotoxin biosynthesis. In terms of biological role, cysteine desulfurase-like protein; part of the gene cluster that mediates the biosynthesis of the secondary metabolite ustiloxin B, an antimitotic tetrapeptide. First, ustA is processed by the subtilisin-like endoprotease Kex2 that is outside the ustiloxin B gene cluster, at the C-terminal side of Arg-Lys, after transfer to Golgi apparatus through the endoplasmic reticulum (ER). Cleavage by KEX2 generates 16 peptides YAIG-I to YAIG-XVI. To process the precursor peptide further, at least two peptidases are necessary to cleave the N-terminal and C-terminal sides of the Tyr-Ala-Ile-Gly core peptide which serves as backbone for the synthesis of ustiloxin B, through cyclization and modification of the tyrosine with a non-protein coding amino acid, norvaline. One of the two peptidases must be the serine peptidase ustP; and the other pepdidase is probably ustH. Macrocyclization of the core peptide derived from ustA requires the tyrosinase ustQ, as well as the homologous oxidases ustYa and ustYb, and leads to the production of the first cyclization product N-desmethylustiloxin F. For the formation of N-desmethylustiloxin F, three oxidation steps are required, hydroxylation at the benzylic position, hydroxylation at either the aromatic ring of Tyr or beta-position of Ile, and oxidative cyclization. UstQ may catalyze the oxidation of a phenol moiety, whereas the ustYa and ustYb are most likely responsible for the remaining two-step oxidations. N-desmethylustiloxin F is then methylated by ustM to yield ustiloxin F which in turn substrate of the cytochrome P450 monooxygenase ustC which catalyzes the formation of S-deoxyustiloxin H. The flavoprotein monooxygenases ustF1 and ustF2 then participate in the modification of the side chain of S-deoxyustiloxin H, leading to the synthesis of an oxime intermediate, via ustiloxin H. Finally, carboxylative dehydration performed by the cysteine desulfurase-like protein ustD yields ustiloxin B. The polypeptide is Cysteine desulfurase-like protein ustD (Aspergillus flavus (strain ATCC 200026 / FGSC A1120 / IAM 13836 / NRRL 3357 / JCM 12722 / SRRC 167)).